The following is a 903-amino-acid chain: Disintegrin and metalloproteinase domain-containing protein 12 (903 aa).

The first 31 residues, 1-31, serve as a signal peptide directing secretion; it reads MAERPARRAPPARALLLALAGALLAPRAARG. Positions 32 to 205 are excised as a propeptide; the sequence is MSLWDQRGTY…SQMRARRHKR (174 aa). Residues Asn-112, Asn-147, and Asn-157 are each glycosylated (N-linked (GlcNAc...) asparagine). Positions 175-182 match the Cysteine switch motif; it reads GLCGSQHN. A Zn(2+)-binding site is contributed by Cys-177. 2 N-linked (GlcNAc...) asparagine glycosylation sites follow: Asn-182 and Asn-185. At 206–706 the chain is on the extracellular side; it reads ETLKMTKYVE…GPIRQADNQG (501 aa). Positions 212 to 414 constitute a Peptidase M12B domain; that stretch reads KYVELVIVAD…GMGMCLFNLP (203 aa). Disulfide bonds link Cys-323–Cys-409, Cys-365–Cys-393, and Cys-367–Cys-376. His-348 serves as a coordination point for Zn(2+). Glu-349 is a catalytic residue. The Zn(2+) site is built by His-352 and His-358. Residues 422 to 508 enclose the Disintegrin domain; sequence GRKCGNGYVE…HCPANVYLHD (87 aa). N-linked (GlcNAc...) asparagine glycosylation occurs at Asn-450. A disulfide bond links Cys-480 and Cys-500. N-linked (GlcNAc...) asparagine glycosylation occurs at Asn-649. Positions 654–686 constitute an EGF-like domain; sequence GVHKCAMQCHGRGVCNNRKNCHCEAHWAPPFCD. 3 disulfides stabilise this stretch: Cys-658–Cys-668, Cys-662–Cys-674, and Cys-676–Cys-685. Residues 707–727 form a helical membrane-spanning segment; sequence LTVGILVSILCLLAAGFVVYL. The Cytoplasmic portion of the chain corresponds to 728–903; it reads KRKTLMRLLF…PRPSHNAYIK (176 aa). Disordered stretches follow at residues 753 to 790 and 819 to 903; these read SRTP…HSLK and HQTP…AYIK. 2 short sequence motifs (SH3-binding; class II) span residues 824–830 and 846–852; these read APSGPAR and KPSPPQK. Short sequence motifs (SH3-binding; class I) lie at residues 830–837, 852–858, and 881–887; these read RPLPASPA, KPLPADP, and RPAPIRP. A compositionally biased stretch (pro residues) spans 847–856; sequence PSPPQKPLPA. Phosphotyrosine; by SRC is present on Tyr-901.

Interacts with alpha-actinin-2 and with syndecans. Interacts with SH3PXD2A. Interacts with FST3. Interacts with RACK1; the interaction is required for PKC-dependent translocation of ADAM12 to the cell membrane. It depends on Zn(2+) as a cofactor. In terms of processing, the precursor is cleaved by a furin endopeptidase. Expressed during early developing mesenchymal cells that give rise to skeletal muscle, bones and visceral organs. Not expressed in adult normal muscle but expressed in regenerating muscle.

It is found in the membrane. Its function is as follows. Involved in skeletal muscle regeneration, specifically at the onset of cell fusion. Also involved in macrophage-derived giant cells (MGC) and osteoclast formation from mononuclear precursors. This chain is Disintegrin and metalloproteinase domain-containing protein 12 (Adam12), found in Mus musculus (Mouse).